Consider the following 73-residue polypeptide: MNLLAIGAAIAALTGIGAGVGIGIATGKAVEAVSRQPEASGKIMQLLLLGGALAEATAIYGLLVAIMIIIFKP.

A run of 2 helical transmembrane segments spans residues 4 to 24 (LAIG…GIGI) and 51 to 71 (GALA…IIIF).

Belongs to the ATPase C chain family. In terms of assembly, F-type ATPases have 2 components, F(1) - the catalytic core - and F(0) - the membrane proton channel. F(1) has five subunits: alpha(3), beta(3), gamma(1), delta(1), epsilon(1). F(0) has three main subunits: a(1), b(2) and c(10-14). The alpha and beta chains form an alternating ring which encloses part of the gamma chain. F(1) is attached to F(0) by a central stalk formed by the gamma and epsilon chains, while a peripheral stalk is formed by the delta and b chains.

The protein resides in the cell membrane. In terms of biological role, f(1)F(0) ATP synthase produces ATP from ADP in the presence of a proton or sodium gradient. F-type ATPases consist of two structural domains, F(1) containing the extramembraneous catalytic core and F(0) containing the membrane proton channel, linked together by a central stalk and a peripheral stalk. During catalysis, ATP synthesis in the catalytic domain of F(1) is coupled via a rotary mechanism of the central stalk subunits to proton translocation. Its function is as follows. Key component of the F(0) channel; it plays a direct role in translocation across the membrane. A homomeric c-ring of between 10-14 subunits forms the central stalk rotor element with the F(1) delta and epsilon subunits. This is ATP synthase subunit c from Caldanaerobacter subterraneus subsp. tengcongensis (strain DSM 15242 / JCM 11007 / NBRC 100824 / MB4) (Thermoanaerobacter tengcongensis).